A 412-amino-acid polypeptide reads, in one-letter code: uncharacterized protein (412 aa).

The 180-residue stretch at 20–199 folds into the UmuC domain; sequence FFYFDFDAFF…LPIVELPGIG (180 aa).

The protein belongs to the DNA polymerase type-Y family.

This is an uncharacterized protein from Mycoplasma pneumoniae (strain ATCC 29342 / M129 / Subtype 1) (Mycoplasmoides pneumoniae).